The primary structure comprises 359 residues: Serine/threonine-protein phosphatase 2A activator 2 (359 aa).

Belongs to the PTPA-type PPIase family.

The protein resides in the cytoplasm. It catalyses the reaction [protein]-peptidylproline (omega=180) = [protein]-peptidylproline (omega=0). Its function is as follows. PPIases accelerate the folding of proteins. It catalyzes the cis-trans isomerization of proline imidic peptide bonds in oligopeptides. Acts as a regulatory subunit for PP2A-like phosphatases modulating their activity or substrate specificity, probably by inducing a conformational change in the catalytic subunit, a direct target of the PPIase. Can reactivate inactive phosphatase PP2A-phosphatase methylesterase complexes (PP2Ai) in presence of ATP and Mg(2+) by dissociating the inactive form from the complex. The chain is Serine/threonine-protein phosphatase 2A activator 2 (RRD2) from Eremothecium gossypii (strain ATCC 10895 / CBS 109.51 / FGSC 9923 / NRRL Y-1056) (Yeast).